A 361-amino-acid chain; its full sequence is 3-dehydroquinate synthase (361 aa).

NAD(+) is bound by residues 72 to 77, 130 to 131, lysine 142, and lysine 151; these read SGEKEK and TT. 3 residues coordinate Zn(2+): glutamate 184, histidine 247, and histidine 264.

Belongs to the sugar phosphate cyclases superfamily. Dehydroquinate synthase family. NAD(+) is required as a cofactor. It depends on Co(2+) as a cofactor. Zn(2+) serves as cofactor.

The protein localises to the cytoplasm. The catalysed reaction is 7-phospho-2-dehydro-3-deoxy-D-arabino-heptonate = 3-dehydroquinate + phosphate. It participates in metabolic intermediate biosynthesis; chorismate biosynthesis; chorismate from D-erythrose 4-phosphate and phosphoenolpyruvate: step 2/7. Catalyzes the conversion of 3-deoxy-D-arabino-heptulosonate 7-phosphate (DAHP) to dehydroquinate (DHQ). The chain is 3-dehydroquinate synthase from Bacillus cereus (strain ATCC 14579 / DSM 31 / CCUG 7414 / JCM 2152 / NBRC 15305 / NCIMB 9373 / NCTC 2599 / NRRL B-3711).